A 367-amino-acid polypeptide reads, in one-letter code: Ribosomal lysine N-methyltransferase 5 (367 aa).

Positions 55–74 (EGGRKKKRVRRRNKASSVEE) are disordered. Basic residues predominate over residues 58-68 (RKKKRVRRRNK). S-adenosyl-L-methionine contacts are provided by residues Trp-110, 170-172 (GAG), Asp-192, Trp-256, and Met-288.

The protein belongs to the class I-like SAM-binding methyltransferase superfamily. RKM5 family.

Functionally, S-adenosyl-L-methionine-dependent protein-lysine N-methyltransferase that monomethylates 60S ribosomal protein L1 (RPL1A and RPL1B) at 'Lys-46'. This Saccharomyces cerevisiae (strain AWRI796) (Baker's yeast) protein is Ribosomal lysine N-methyltransferase 5 (RKM5).